The sequence spans 296 residues: 5,10-methylenetetrahydrofolate reductase (296 aa).

The active-site Proton donor/acceptor is the E28. Residue T59 participates in NADH binding. Residues Y60, A62, H88, R118, G119, D120, A132, Y152, H156, A159, D165, N168, R171, and K172 each contribute to the FAD site. D120 provides a ligand contact to (6S)-5-methyl-5,6,7,8-tetrahydrofolate. Residue Q183 coordinates NADH. (6S)-5-methyl-5,6,7,8-tetrahydrofolate-binding residues include Q183, Q219, and R279.

It belongs to the methylenetetrahydrofolate reductase family. As to quaternary structure, homotetramer. FAD is required as a cofactor.

It carries out the reaction (6S)-5-methyl-5,6,7,8-tetrahydrofolate + NAD(+) = (6R)-5,10-methylene-5,6,7,8-tetrahydrofolate + NADH + H(+). It functions in the pathway one-carbon metabolism; tetrahydrofolate interconversion. It participates in amino-acid biosynthesis; L-methionine biosynthesis via de novo pathway. Its function is as follows. Catalyzes the NADH-dependent reduction of 5,10-methylenetetrahydrofolate to 5-methyltetrahydrofolate. Is required to provide the methyl group necessary for methionine synthetase to convert homocysteine to methionine; the methyl group is given by 5-methyltetrahydrofolate. Can also use NADPH as the reductant, but much less effectively than NADH. This Escherichia coli (strain K12) protein is 5,10-methylenetetrahydrofolate reductase.